A 261-amino-acid chain; its full sequence is Phosphatidylglycerol--prolipoprotein diacylglyceryl transferase (261 aa).

Transmembrane regions (helical) follow at residues Val-19–Tyr-39, Leu-56–Tyr-76, Trp-92–Phe-112, Phe-126–Gly-146, Gln-173–Ala-193, Phe-199–Phe-219, and Gly-227–Ile-247. Residue Arg-139 participates in a 1,2-diacyl-sn-glycero-3-phospho-(1'-sn-glycerol) binding.

It belongs to the Lgt family.

The protein resides in the cell inner membrane. The enzyme catalyses L-cysteinyl-[prolipoprotein] + a 1,2-diacyl-sn-glycero-3-phospho-(1'-sn-glycerol) = an S-1,2-diacyl-sn-glyceryl-L-cysteinyl-[prolipoprotein] + sn-glycerol 1-phosphate + H(+). It functions in the pathway protein modification; lipoprotein biosynthesis (diacylglyceryl transfer). Catalyzes the transfer of the diacylglyceryl group from phosphatidylglycerol to the sulfhydryl group of the N-terminal cysteine of a prolipoprotein, the first step in the formation of mature lipoproteins. The polypeptide is Phosphatidylglycerol--prolipoprotein diacylglyceryl transferase (Coxiella burnetii (strain CbuK_Q154) (Coxiella burnetii (strain Q154))).